The sequence spans 255 residues: tRNA1(Val) (adenine(37)-N6)-methyltransferase (255 aa).

It belongs to the methyltransferase superfamily. tRNA (adenine-N(6)-)-methyltransferase family.

The protein localises to the cytoplasm. The enzyme catalyses adenosine(37) in tRNA1(Val) + S-adenosyl-L-methionine = N(6)-methyladenosine(37) in tRNA1(Val) + S-adenosyl-L-homocysteine + H(+). Its function is as follows. Specifically methylates the adenine in position 37 of tRNA(1)(Val) (anticodon cmo5UAC). This Porphyromonas gingivalis (strain ATCC BAA-308 / W83) protein is tRNA1(Val) (adenine(37)-N6)-methyltransferase.